Here is a 729-residue protein sequence, read N- to C-terminus: DNA gyrase subunit B, chloroplastic/mitochondrial (729 aa).

In terms of domain architecture, Toprim spans 510–617 (SEIFIVEGDS…RYQKALFDEG (108 aa)). Residues E516, D590, and D592 each contribute to the Mg(2+) site.

The protein belongs to the type II topoisomerase GyrB family. In terms of assembly, made up of two chains. The A chain is responsible for DNA breakage and rejoining; the B chain catalyzes ATP hydrolysis. Mg(2+) is required as a cofactor. Mn(2+) serves as cofactor. The cofactor is Ca(2+).

It localises to the plastid. It is found in the chloroplast. Its subcellular location is the mitochondrion. The catalysed reaction is ATP-dependent breakage, passage and rejoining of double-stranded DNA.. A type II topoisomerase that negatively supercoils closed circular double-stranded DNA in an ATP-dependent manner. This chain is DNA gyrase subunit B, chloroplastic/mitochondrial (GYRB), found in Oryza sativa subsp. japonica (Rice).